The sequence spans 219 residues: Protein-L-isoaspartate O-methyltransferase 1 (219 aa).

Residue S67 is part of the active site.

It belongs to the methyltransferase superfamily. L-isoaspartyl/D-aspartyl protein methyltransferase family.

The protein localises to the cytoplasm. It carries out the reaction [protein]-L-isoaspartate + S-adenosyl-L-methionine = [protein]-L-isoaspartate alpha-methyl ester + S-adenosyl-L-homocysteine. Catalyzes the methyl esterification of L-isoaspartyl residues in peptides and proteins that result from spontaneous decomposition of normal L-aspartyl and L-asparaginyl residues. It plays a role in the repair and/or degradation of damaged proteins. The sequence is that of Protein-L-isoaspartate O-methyltransferase 1 from Geotalea uraniireducens (strain Rf4) (Geobacter uraniireducens).